A 353-amino-acid polypeptide reads, in one-letter code: MTAILERREASSLWARFCEWVTSTENRLYVGWFGVIMIPTLLTAVSVFIIAFVAAPPVDIDGIREPVSGSLLYGNNIISGAIIPTSNAIGLHFYPIWEAASVDEWLYNGGPYQLIVCHFFLGICCYMGREWELSFRLGMRPWIAVAYSAPVAAATAVFIIYPIGQGSFSDGMPLGISGTFNFMIVFQAEHNILMHPFHMLGVAGVFGGSLFSAMHGSLVTSSLIRETTENESTNAGYKFGQEEETYNIVAAHGYFGRLIFQYASFNNSRSLHFFLAAWPVVGIWFTALGISTMAFNLNGFNFNQSIVDSQGRVLNSWADIINRANLGMEVMHERNAHNFPLDLASVEAPSING.

Threonine 2 is modified (N-acetylthreonine). The residue at position 2 (threonine 2) is a Phosphothreonine. The next 3 helical transmembrane spans lie at 29–46 (YVGW…TAVS), 118–133 (HFFL…EWEL), and 142–156 (WIAV…AATA). Chlorophyll a is bound at residue histidine 118. Tyrosine 126 is a binding site for pheophytin a. Residues aspartate 170 and glutamate 189 each contribute to the [CaMn4O5] cluster site. The helical transmembrane segment at 197–218 (FHMLGVAGVFGGSLFSAMHGSL) threads the bilayer. Residue histidine 198 coordinates chlorophyll a. Residues histidine 215 and 264–265 (SF) each bind a quinone. Histidine 215 contributes to the Fe cation binding site. Histidine 272 contacts Fe cation. A helical membrane pass occupies residues 274–288 (FLAAWPVVGIWFTAL). [CaMn4O5] cluster is bound by residues histidine 332, glutamate 333, aspartate 342, and alanine 344. The propeptide occupies 345-353 (SVEAPSING).

It belongs to the reaction center PufL/M/PsbA/D family. In terms of assembly, PSII is composed of 1 copy each of membrane proteins PsbA, PsbB, PsbC, PsbD, PsbE, PsbF, PsbH, PsbI, PsbJ, PsbK, PsbL, PsbM, PsbT, PsbX, PsbY, PsbZ, Psb30/Ycf12, at least 3 peripheral proteins of the oxygen-evolving complex and a large number of cofactors. It forms dimeric complexes. The cofactor is The D1/D2 heterodimer binds P680, chlorophylls that are the primary electron donor of PSII, and subsequent electron acceptors. It shares a non-heme iron and each subunit binds pheophytin, quinone, additional chlorophylls, carotenoids and lipids. D1 provides most of the ligands for the Mn4-Ca-O5 cluster of the oxygen-evolving complex (OEC). There is also a Cl(-1) ion associated with D1 and D2, which is required for oxygen evolution. The PSII complex binds additional chlorophylls, carotenoids and specific lipids.. In terms of processing, tyr-161 forms a radical intermediate that is referred to as redox-active TyrZ, YZ or Y-Z. Post-translationally, C-terminally processed by CTPA; processing is essential to allow assembly of the oxygen-evolving complex and thus photosynthetic growth.

It is found in the plastid. The protein localises to the chloroplast thylakoid membrane. The enzyme catalyses 2 a plastoquinone + 4 hnu + 2 H2O = 2 a plastoquinol + O2. In terms of biological role, photosystem II (PSII) is a light-driven water:plastoquinone oxidoreductase that uses light energy to abstract electrons from H(2)O, generating O(2) and a proton gradient subsequently used for ATP formation. It consists of a core antenna complex that captures photons, and an electron transfer chain that converts photonic excitation into a charge separation. The D1/D2 (PsbA/PsbD) reaction center heterodimer binds P680, the primary electron donor of PSII as well as several subsequent electron acceptors. This Tupiella akineta (Green alga) protein is Photosystem II protein D1.